The following is a 294-amino-acid chain: Secreted frizzled-related protein 2 (294 aa).

An N-terminal signal peptide occupies residues 1 to 24; the sequence is MPRGPGSLLLLVLASHCCLGSARG. Residues 34–154 enclose the FZ domain; it reads YKRSNCKPIP…PQDNDLCIPL (121 aa). 8 disulfide bridges follow: Cys-39–Cys-102, Cys-49–Cys-95, Cys-86–Cys-124, Cys-113–Cys-151, Cys-117–Cys-141, Cys-171–Cys-244, Cys-174–Cys-246, and Cys-189–Cys-294. One can recognise an NTR domain in the interval 171–294; sequence CEACKNKNED…ISRSIRKLQC (124 aa).

Belongs to the secreted frizzled-related protein (sFRP) family.

The protein localises to the secreted. Functionally, soluble frizzled-related proteins (sFRPS) function as modulators of Wnt signaling through direct interaction with Wnts. They have a role in regulating cell growth and differentiation in specific cell types. SFRP2 may be important for eye retinal development and for myogenesis. The chain is Secreted frizzled-related protein 2 (SFRP2) from Canis lupus familiaris (Dog).